The chain runs to 338 residues: Aspartate-semialdehyde dehydrogenase (338 aa).

Residues 13–16 (TGAV) and 41–42 (RS) each bind NADP(+). Residue arginine 101 coordinates phosphate. The Acyl-thioester intermediate role is filled by cysteine 130. Substrate is bound at residue glutamine 157. Residue 160–161 (SG) participates in NADP(+) binding. Lysine 214 contributes to the phosphate binding site. Arginine 236 provides a ligand contact to substrate. Histidine 243 functions as the Proton acceptor in the catalytic mechanism. An NADP(+)-binding site is contributed by glutamine 316.

This sequence belongs to the aspartate-semialdehyde dehydrogenase family. Homodimer.

The catalysed reaction is L-aspartate 4-semialdehyde + phosphate + NADP(+) = 4-phospho-L-aspartate + NADPH + H(+). Its pathway is amino-acid biosynthesis; L-lysine biosynthesis via DAP pathway; (S)-tetrahydrodipicolinate from L-aspartate: step 2/4. It participates in amino-acid biosynthesis; L-methionine biosynthesis via de novo pathway; L-homoserine from L-aspartate: step 2/3. The protein operates within amino-acid biosynthesis; L-threonine biosynthesis; L-threonine from L-aspartate: step 2/5. In terms of biological role, catalyzes the NADPH-dependent formation of L-aspartate-semialdehyde (L-ASA) by the reductive dephosphorylation of L-aspartyl-4-phosphate. In Synechocystis sp. (strain ATCC 27184 / PCC 6803 / Kazusa), this protein is Aspartate-semialdehyde dehydrogenase (asd).